A 1145-amino-acid chain; its full sequence is Structure-specific endonuclease subunit SLX4 (1145 aa).

Positions 48–108 (ADIPVQPDPP…GKSKQQPSIS (61 aa)) are disordered. Positions 321–372 (ERETQKCRQLRQQHELVYAELERYYGDPQKLEEEVMQELDELEKLVADNMIE) form a coiled coil. Residues 382-393 (EAESSSTGSSPS) show a composition bias toward low complexity. Disordered stretches follow at residues 382–442 (EAES…EDEP), 613–634 (QSSH…SSFS), and 666–689 (SAEK…DLTQ). The segment covering 395–410 (EPPDKRPKMTMEDKEN) has biased composition (basic and acidic residues). Composition is skewed to polar residues over residues 411–430 (LQPT…TRCT), 613–633 (QSSH…SSSF), and 678–689 (YKQSDASVDLTQ).

This sequence belongs to the SLX4 family. As to quaternary structure, forms a heterodimer with SLX1. Interacts with mei-9; catalytic subunit of the MEI-9-ERCC1 endonuclease.

Its subcellular location is the nucleus. Functionally, regulatory subunit that interacts with and increases the activity of different structure-specific endonucleases. Has several distinct roles in protecting genome stability by resolving diverse forms of deleterious DNA structures originating from replication and recombination intermediates and from DNA damage. Component of the SLX1-SLX4 structure-specific endonuclease that resolves DNA secondary structures generated during DNA repair and recombination. Has endonuclease activity towards branched DNA substrates, introducing single-strand cuts in duplex DNA close to junctions with ss-DNA. Interacts with the structure-specific MEI-9-ERCC1 endonuclease to generate meiotic crossovers. This chain is Structure-specific endonuclease subunit SLX4 (mus312), found in Drosophila melanogaster (Fruit fly).